We begin with the raw amino-acid sequence, 105 residues long: Met repressor (105 aa).

This sequence belongs to the MetJ family. In terms of assembly, homodimer.

The protein localises to the cytoplasm. In terms of biological role, this regulatory protein, when combined with SAM (S-adenosylmethionine) represses the expression of the methionine regulon and of enzymes involved in SAM synthesis. The chain is Met repressor from Hamiltonella defensa subsp. Acyrthosiphon pisum (strain 5AT).